The sequence spans 282 residues: MSVYDKHQALSGLTLGKPTPYHDRYDAALLQPVPRSLNRDPLGIHPDSLPFHGADIWTLYELSWLNNRGVPQVAVGEMHLNAESLNLIESKSFKLYLNSFNQTTFDSWESVRATLANDLAHCAQGDVSITLFKLSELEGQPLAGFTGECIDDQDIQIDSYDFNADYLATNEQDAPVVEETLVSHLLKSNCLITHQPDWGSVQIHYRGKRINREALLRYIISFRHHNEFHEQCVERIFNDIMRYYQPEKLSVYARYTRRGGLDINPWRSNTAFNAPNGRLPRQ.

Isoleucine 88–serine 90 contacts substrate. Residue serine 90–lysine 91 coordinates NADPH. Cysteine 190 acts as the Thioimide intermediate in catalysis. Catalysis depends on aspartate 197, which acts as the Proton donor. Histidine 229 to glutamate 230 is a substrate binding site. Arginine 258 to glycine 259 lines the NADPH pocket.

It belongs to the GTP cyclohydrolase I family. QueF type 2 subfamily. Homodimer.

It is found in the cytoplasm. It catalyses the reaction 7-aminomethyl-7-carbaguanine + 2 NADP(+) = 7-cyano-7-deazaguanine + 2 NADPH + 3 H(+). It participates in tRNA modification; tRNA-queuosine biosynthesis. Catalyzes the NADPH-dependent reduction of 7-cyano-7-deazaguanine (preQ0) to 7-aminomethyl-7-deazaguanine (preQ1). In Pectobacterium carotovorum subsp. carotovorum (strain PC1), this protein is NADPH-dependent 7-cyano-7-deazaguanine reductase.